A 230-amino-acid chain; its full sequence is Ureidoacrylate amidohydrolase RutB (230 aa).

The active-site Proton acceptor is aspartate 24. Lysine 133 is an active-site residue. Cysteine 166 (nucleophile) is an active-site residue.

This sequence belongs to the isochorismatase family. RutB subfamily.

The catalysed reaction is (Z)-3-ureidoacrylate + H2O + H(+) = (Z)-3-aminoacrylate + NH4(+) + CO2. It catalyses the reaction (Z)-3-ureidoacrylate + H2O = (Z)-3-aminoacrylate + carbamate + H(+). The enzyme catalyses (Z)-2-methylureidoacrylate + H2O + H(+) = (Z)-2-methylaminoacrylate + NH4(+) + CO2. In terms of biological role, hydrolyzes ureidoacrylate to form aminoacrylate and carbamate. The carbamate hydrolyzes spontaneously, thereby releasing one of the nitrogen atoms of the pyrimidine ring as ammonia and one of its carbon atoms as CO2. The protein is Ureidoacrylate amidohydrolase RutB of Escherichia coli O7:K1 (strain IAI39 / ExPEC).